A 200-amino-acid chain; its full sequence is 2,3-bisphosphoglycerate-dependent phosphoglycerate mutase (200 aa).

The Tele-phosphohistidine intermediate role is filled by His9. His142 is a catalytic residue.

It belongs to the phosphoglycerate mutase family. In terms of assembly, homodimer.

It carries out the reaction (2R)-2-phosphoglycerate = (2R)-3-phosphoglycerate. The protein operates within carbohydrate degradation; glycolysis; pyruvate from D-glyceraldehyde 3-phosphate: step 3/5. Functionally, catalyzes the interconversion of 2-phosphoglycerate and 3-phosphoglycerate. The protein is 2,3-bisphosphoglycerate-dependent phosphoglycerate mutase of Thermoplasma acidophilum (strain ATCC 25905 / DSM 1728 / JCM 9062 / NBRC 15155 / AMRC-C165).